The sequence spans 1142 residues: Melanoma-associated antigen C1 (1142 aa).

A disordered region spans residues 1–132 (MGDKDMPTAG…DVQSPLQNPA (132 aa)). Positions 13–42 (SLLQSSSESPQSCPEGEDSQSPLQIPQSSP) are enriched in low complexity. S63 carries the phosphoserine modification. The span at 76–87 (SQSPLQIPQSSP) shows a compositional bias: low complexity. A compositionally biased stretch (polar residues) spans 92–103 (TQSPLQNSQSSP). A phosphoserine mark is found at S207 and S382. Disordered stretches follow at residues 502–778 (TQST…LQRP) and 791–893 (LQSS…SLTD). Polar residues predominate over residues 614 to 626 (SPLQGEEFQSSLQ). A compositionally biased stretch (low complexity) spans 627–659 (SPVSICSSSTPSSLPQSFPESSQSPPEGPVQSP). Residues 671 to 680 (HSQSPLQSPE) show a composition bias toward polar residues. Low complexity-rich tracts occupy residues 741–762 (QSPV…FPES) and 807–889 (QSPL…LESD). Positions 908–1106 (LDEKVDELAR…ITFPSSYKDA (199 aa)) constitute an MAGE domain. Position 1063 is a phosphoserine (S1063). The interval 1118-1142 (IDTTDDSTATESASSSVMSPSFSSE) is disordered. Positions 1123-1142 (DSTATESASSSVMSPSFSSE) are enriched in low complexity.

As to expression, expressed in testis and in tumors of a wide variety of histologic types.

The protein resides in the cytoplasm. This is Melanoma-associated antigen C1 (MAGEC1) from Homo sapiens (Human).